A 373-amino-acid chain; its full sequence is Chaperone protein DnaJ (373 aa).

A J domain is found at 5-70 (DYYEVLGVNR…QKRAAYDQYG (66 aa)). A CR-type zinc finger spans residues 133–211 (GTETKIRIPV…CHGGGRVKQH (79 aa)). The Zn(2+) site is built by Cys-146, Cys-149, Cys-163, Cys-166, Cys-185, Cys-188, Cys-199, and Cys-202. CXXCXGXG motif repeat units follow at residues 146 to 153 (CETCHGSG), 163 to 170 (CSTCGGHG), 185 to 192 (CPKCHGSG), and 199 to 206 (CPTCHGGG). Residues 346–373 (LEDINQQDSGKHSPREKSWMTKVKDFFQ) are disordered. Over residues 354-373 (SGKHSPREKSWMTKVKDFFQ) the composition is skewed to basic and acidic residues.

The protein belongs to the DnaJ family. In terms of assembly, homodimer. The cofactor is Zn(2+).

It localises to the cytoplasm. Its function is as follows. Participates actively in the response to hyperosmotic and heat shock by preventing the aggregation of stress-denatured proteins and by disaggregating proteins, also in an autonomous, DnaK-independent fashion. Unfolded proteins bind initially to DnaJ; upon interaction with the DnaJ-bound protein, DnaK hydrolyzes its bound ATP, resulting in the formation of a stable complex. GrpE releases ADP from DnaK; ATP binding to DnaK triggers the release of the substrate protein, thus completing the reaction cycle. Several rounds of ATP-dependent interactions between DnaJ, DnaK and GrpE are required for fully efficient folding. Also involved, together with DnaK and GrpE, in the DNA replication of plasmids through activation of initiation proteins. This Methylobacillus flagellatus (strain ATCC 51484 / DSM 6875 / VKM B-1610 / KT) protein is Chaperone protein DnaJ.